We begin with the raw amino-acid sequence, 401 residues long: MARPDLHERISSLRKLRVAQERVRVRRQVGRRDGVRLEIDGRWLTGFCSNDYLGLSQQFEVVAALQDAAARDGAGATASHLICGHHTAHETLEREIADWLGYPSALLFGSGFIANLAVQQALLSEEDDVCVQDRLNHASLLDATRLAGCRLRRYPHLDVEGAMRQLKGAPEGAAMLATDGVFSMDGDVAPLRALSLVARMQHALFYVDDAHGVGVLGPQGRGCVADAGLGVAEVPLQLVTLGKALGGYGAVVVGEEALVRHLAETARPYIYTTALPPAQVAATLAAVRLARRDDWRRTRLVELIGAFRDGARKHGFELMASDTPIQPLLCGEEATVMAMSAALEHAGFMVGAIRPPTVPEGKARLRVTLSALHTPQQVQALIEAIVQARDVVSRQPLRASA.

A substrate-binding site is contributed by Arg-24. 111–112 serves as a coordination point for pyridoxal 5'-phosphate; the sequence is GF. His-137 serves as a coordination point for substrate. The pyridoxal 5'-phosphate site is built by Ser-183, His-211, and Thr-240. Residue Lys-243 is modified to N6-(pyridoxal phosphate)lysine. Thr-357 provides a ligand contact to substrate.

It belongs to the class-II pyridoxal-phosphate-dependent aminotransferase family. BioF subfamily. As to quaternary structure, homodimer. Pyridoxal 5'-phosphate is required as a cofactor.

It catalyses the reaction 6-carboxyhexanoyl-[ACP] + L-alanine + H(+) = (8S)-8-amino-7-oxononanoate + holo-[ACP] + CO2. It participates in cofactor biosynthesis; biotin biosynthesis. In terms of biological role, catalyzes the decarboxylative condensation of pimeloyl-[acyl-carrier protein] and L-alanine to produce 8-amino-7-oxononanoate (AON), [acyl-carrier protein], and carbon dioxide. The sequence is that of 8-amino-7-oxononanoate synthase from Xanthomonas euvesicatoria pv. vesicatoria (strain 85-10) (Xanthomonas campestris pv. vesicatoria).